A 226-amino-acid polypeptide reads, in one-letter code: Large ribosomal subunit protein uL1 (226 aa).

Belongs to the universal ribosomal protein uL1 family. As to quaternary structure, part of the 50S ribosomal subunit.

Functionally, binds directly to 23S rRNA. The L1 stalk is quite mobile in the ribosome, and is involved in E site tRNA release. Its function is as follows. Protein L1 is also a translational repressor protein, it controls the translation of the L11 operon by binding to its mRNA. The sequence is that of Large ribosomal subunit protein uL1 from Mycoplasma genitalium (strain ATCC 33530 / DSM 19775 / NCTC 10195 / G37) (Mycoplasmoides genitalium).